The chain runs to 784 residues: Ubiquitin carboxyl-terminal hydrolase 1 (784 aa).

Disordered stretches follow at residues 1-21 (MPGV…SKKN) and 34-56 (KRAL…RGSE). The segment covering 7 to 16 (SESNGLSRGS) has biased composition (polar residues). A phosphoserine mark is found at Ser16 and Ser42. Positions 45–56 (NEEKTSEYRGSE) are enriched in basic and acidic residues. Ser67 carries the post-translational modification Phosphoserine. The USP domain maps to 81-784 (VGLNNLGNTC…TPYLLFYKKL (704 aa)). Cys90 serves as the catalytic Nucleophile. Basic and acidic residues-rich tracts occupy residues 233–243 (VEEQSLQKEET) and 252–264 (DSMR…KEQL). Disordered stretches follow at residues 233–342 (VEEQ…INWL) and 362–414 (TTNQ…KSGN). Ser474 is subject to Phosphoserine. His592 (proton acceptor) is an active-site residue. A disordered region spans residues 684-725 (NPDKVVGTPFTDNRNSETNDTTNGTHESDRNKESSDQTGVNM). Positions 693-708 (FTDNRNSETNDTTNGT) are enriched in polar residues. A compositionally biased stretch (basic and acidic residues) spans 709–718 (HESDRNKESS). Ser767 is modified (phosphoserine).

This sequence belongs to the peptidase C19 family. As to quaternary structure, interacts with FANCD2 and PCNA. Interacts with WDR48. Interacts with ATAD5; the interaction regulates USP1-mediated PCNA deubiquitination. Post-translationally, autocatalytic cleavage of USP1 following UV irradiation inactivates it, leading to an increase in ubiquitinated PCNA, recruitment of POLH and translesion synthesis. Ubiquitinated by the CRL2(KLHDC2) complex following autocatalytic cleavage, leading to its degradation: the CRL2(KLHDC2) complex recognizes the diglycine (Gly-Gly) at the C-terminus.

The protein localises to the nucleus. It catalyses the reaction Thiol-dependent hydrolysis of ester, thioester, amide, peptide and isopeptide bonds formed by the C-terminal Gly of ubiquitin (a 76-residue protein attached to proteins as an intracellular targeting signal).. Negative regulator of DNA damage repair which specifically deubiquitinates monoubiquitinated FANCD2. Also involved in PCNA-mediated translesion synthesis (TLS) by deubiquitinating monoubiquitinated PCNA. Has almost no deubiquitinating activity by itself and requires the interaction with WDR48 to have a high activity. This chain is Ubiquitin carboxyl-terminal hydrolase 1, found in Mus musculus (Mouse).